Consider the following 262-residue polypeptide: Acyl-[acyl-carrier-protein]--UDP-N-acetylglucosamine O-acyltransferase (262 aa).

This sequence belongs to the transferase hexapeptide repeat family. LpxA subfamily. In terms of assembly, homotrimer.

The protein localises to the cytoplasm. It carries out the reaction a (3R)-hydroxyacyl-[ACP] + UDP-N-acetyl-alpha-D-glucosamine = a UDP-3-O-[(3R)-3-hydroxyacyl]-N-acetyl-alpha-D-glucosamine + holo-[ACP]. It functions in the pathway glycolipid biosynthesis; lipid IV(A) biosynthesis; lipid IV(A) from (3R)-3-hydroxytetradecanoyl-[acyl-carrier-protein] and UDP-N-acetyl-alpha-D-glucosamine: step 1/6. Involved in the biosynthesis of lipid A, a phosphorylated glycolipid that anchors the lipopolysaccharide to the outer membrane of the cell. The sequence is that of Acyl-[acyl-carrier-protein]--UDP-N-acetylglucosamine O-acyltransferase from Paraburkholderia phytofirmans (strain DSM 17436 / LMG 22146 / PsJN) (Burkholderia phytofirmans).